Here is a 301-residue protein sequence, read N- to C-terminus: ATP synthase gamma chain (301 aa).

It belongs to the ATPase gamma chain family. As to quaternary structure, F-type ATPases have 2 components, CF(1) - the catalytic core - and CF(0) - the membrane proton channel. CF(1) has five subunits: alpha(3), beta(3), gamma(1), delta(1), epsilon(1). CF(0) has three main subunits: a, b and c.

Its subcellular location is the cell inner membrane. Its function is as follows. Produces ATP from ADP in the presence of a proton gradient across the membrane. The gamma chain is believed to be important in regulating ATPase activity and the flow of protons through the CF(0) complex. This Helicobacter acinonychis (strain Sheeba) protein is ATP synthase gamma chain.